Consider the following 63-residue polypeptide: Large ribosomal subunit protein bL32 (63 aa).

Basic residues predominate over residues 1-18; that stretch reads MAHPKRRISRSRRDKRRA. The segment at 1–27 is disordered; the sequence is MAHPKRRISRSRRDKRRAQYNAKTKAP.

The protein belongs to the bacterial ribosomal protein bL32 family.

This Chloroherpeton thalassium (strain ATCC 35110 / GB-78) protein is Large ribosomal subunit protein bL32.